Consider the following 284-residue polypeptide: Bifunctional protein FolD (284 aa).

NADP(+) is bound by residues Gly-164–Ser-166 and Ser-189.

The protein belongs to the tetrahydrofolate dehydrogenase/cyclohydrolase family. In terms of assembly, homodimer.

The enzyme catalyses (6R)-5,10-methylene-5,6,7,8-tetrahydrofolate + NADP(+) = (6R)-5,10-methenyltetrahydrofolate + NADPH. It carries out the reaction (6R)-5,10-methenyltetrahydrofolate + H2O = (6R)-10-formyltetrahydrofolate + H(+). Its pathway is one-carbon metabolism; tetrahydrofolate interconversion. Functionally, catalyzes the oxidation of 5,10-methylenetetrahydrofolate to 5,10-methenyltetrahydrofolate and then the hydrolysis of 5,10-methenyltetrahydrofolate to 10-formyltetrahydrofolate. In Listeria monocytogenes serovar 1/2a (strain ATCC BAA-679 / EGD-e), this protein is Bifunctional protein FolD.